The chain runs to 202 residues: Large ribosomal subunit protein eL13 (202 aa).

A disordered region spans residues 183-202 (GIREKRAKEKAEAEAEKAKK).

It belongs to the eukaryotic ribosomal protein eL13 family. Component of the large ribosomal subunit. Mature ribosomes consist of a small (40S) and a large (60S) subunit. The 40S subunit contains about 32 different proteins and 1 molecule of RNA (18S). The 60S subunit contains 45 different proteins and 3 molecules of RNA (25S, 5.8S and 5S).

The protein resides in the cytoplasm. Component of the ribosome, a large ribonucleoprotein complex responsible for the synthesis of proteins in the cell. The small ribosomal subunit (SSU) binds messenger RNAs (mRNAs) and translates the encoded message by selecting cognate aminoacyl-transfer RNA (tRNA) molecules. The large subunit (LSU) contains the ribosomal catalytic site termed the peptidyl transferase center (PTC), which catalyzes the formation of peptide bonds, thereby polymerizing the amino acids delivered by tRNAs into a polypeptide chain. The nascent polypeptides leave the ribosome through a tunnel in the LSU and interact with protein factors that function in enzymatic processing, targeting, and the membrane insertion of nascent chains at the exit of the ribosomal tunnel. The sequence is that of Large ribosomal subunit protein eL13 from Candida albicans (strain SC5314 / ATCC MYA-2876) (Yeast).